Consider the following 317-residue polypeptide: Cell division protein FtsX (317 aa).

Topologically, residues 1–39 (MAIVRHKQPPLRRFMMYWVDHARQAFSSLGELWRNPLAS) are cytoplasmic. Residues 40–60 (LMTLAVLGVSLALPSCFHVLL) form a helical membrane-spanning segment. The Periplasmic portion of the chain corresponds to 61–188 (KNAEVVEGSW…LQGIMNLLRH (128 aa)). Residues 189–209 (TITGIAVLLLSAVLLIVGNTL) form a helical membrane-spanning segment. Topologically, residues 210-241 (RLNILNQRSEIEVLKLVGATDAFIHRPFLYTG) are cytoplasmic. The helical transmembrane segment at 242 to 262 (IWFGVIGGMLAWWLTEVMVIW) threads the bilayer. The Periplasmic portion of the chain corresponds to 263-280 (SEGVVNELAGLYNSNFRL). Residues 281 to 301 (VGMGAVDGINLILLGALLGLI) form a helical membrane-spanning segment. Residues 302-317 (ASWFSVHRHIRDIEPS) lie on the Cytoplasmic side of the membrane.

This sequence belongs to the ABC-4 integral membrane protein family. FtsX subfamily. As to quaternary structure, forms a membrane-associated complex with FtsE.

It is found in the cell inner membrane. Its function is as follows. Part of the ABC transporter FtsEX involved in cellular division. Encoded in an operon consisting of genes ftsY, ftsE and ftsX. The protein is Cell division protein FtsX of Aeromonas hydrophila.